Reading from the N-terminus, the 166-residue chain is MIGLIQRVSQAAVRVDGRVVGEIGPGLLALVCAERGDTVAEADRLLEKLLNYRVFSDAQGKMNLPVRNIDGNGLAGGLLVVSQFTLAADTKSGTRPSFTPAAAPEAGRRLYEHFVARARQQHPIVATGEFGAMMQVSLVNDGPVTFWLQVAPQAVRAGEAETAKSA.

Residues 142–143 (GP) carry the Gly-cisPro motif, important for rejection of L-amino acids motif.

Belongs to the DTD family. As to quaternary structure, homodimer.

It localises to the cytoplasm. It carries out the reaction glycyl-tRNA(Ala) + H2O = tRNA(Ala) + glycine + H(+). The enzyme catalyses a D-aminoacyl-tRNA + H2O = a tRNA + a D-alpha-amino acid + H(+). An aminoacyl-tRNA editing enzyme that deacylates mischarged D-aminoacyl-tRNAs. Also deacylates mischarged glycyl-tRNA(Ala), protecting cells against glycine mischarging by AlaRS. Acts via tRNA-based rather than protein-based catalysis; rejects L-amino acids rather than detecting D-amino acids in the active site. By recycling D-aminoacyl-tRNA to D-amino acids and free tRNA molecules, this enzyme counteracts the toxicity associated with the formation of D-aminoacyl-tRNA entities in vivo and helps enforce protein L-homochirality. The chain is D-aminoacyl-tRNA deacylase from Ralstonia nicotianae (strain ATCC BAA-1114 / GMI1000) (Ralstonia solanacearum).